The chain runs to 555 residues: E3 ubiquitin-protein ligase ARIH1 (555 aa).

The span at 1 to 47 (MDSDEGYNYEFDEDEECSEEDSGAEEEEDEDDDEPDDDNLDLGEVEL) shows a compositional bias: acidic residues. The disordered stretch occupies residues 1-93 (MDSDEGYNYE…GGGGGPGHEQ (93 aa)). Positions 65 to 90 (ETGGGGGSALGPGGGGGGGGGGGGPG) are enriched in gly residues. Positions 103-151 (TAEQILQHMVECIREVNEVIQNPATITRILLSHFNWDKEKLMERYFDGN) are UBA-like. The residue at position 140 (Lys-140) is an N6-acetyllysine. Residues 180 to 391 (QDMPCQICYL…SAWYNCNRYN (212 aa)) form a TRIAD supradomain region. The Zn(2+) site is built by Cys-184, Cys-187, Cys-201, His-203, Cys-206, Cys-209, Cys-229, Cys-234, Cys-274, Cys-279, Cys-295, Cys-297, Cys-302, Cys-305, His-310, Cys-315, Cys-342, and Cys-345. Residues 184–234 (CQICYLNYPNSYFTGLECGHKFCMQCWSEYLTTKIMEEGMGQTISCPAHGC) form an RING-type 1 zinc finger. The IBR-type zinc finger occupies 254–315 (LKYQHLITNS…GENWHDPVKC (62 aa)). The RING-type 2; atypical zinc finger occupies 342 to 373 (CPKCHVTIEKDGGCNHMVCRNQNCKAEFCWVC). Cys-355 is a catalytic residue. Positions 360, 365, 370, 373, 380, and 387 each coordinate Zn(2+). The interval 406–555 (RAALQRYLFY…EKDLWEYIED (150 aa)) is ariadne domain.

This sequence belongs to the RBR family. Ariadne subfamily. As to quaternary structure, interacts (via the first RING-type zinc finger) with UBE2L3. Associates with cullin-RING ubiquitin ligase (CRL) complexes containing CUL1, CUL2 and CUL3. Interacts with neddylated CUL1. Interacts with neddylated CUL2. Interacts with neddylated CUL3. Interacts with neddylated CUL4A.

The protein localises to the cytoplasm. Its subcellular location is the nucleus. The protein resides in the cajal body. The enzyme catalyses [E2 ubiquitin-conjugating enzyme]-S-ubiquitinyl-L-cysteine + [acceptor protein]-L-lysine = [E2 ubiquitin-conjugating enzyme]-L-cysteine + [acceptor protein]-N(6)-ubiquitinyl-L-lysine.. The protein operates within protein modification; protein ubiquitination. Its activity is regulated as follows. Autoinhibited by the ariadne domain, which masks the second RING-type zinc finger that contains the active site and inhibits the E3 activity. Inhibition is relieved upon binding to neddylated cullin-RING ubiquitin ligase complexes, which activate the E3 ligase activity of ARIH1. E3 ubiquitin-protein ligase, which catalyzes ubiquitination of target proteins together with ubiquitin-conjugating enzyme E2 UBE2L3. Acts as an atypical E3 ubiquitin-protein ligase by working together with cullin-RING ubiquitin ligase (CRL) complexes and initiating ubiquitination of CRL substrates: associates with CRL complexes and specifically mediates addition of the first ubiquitin on CRLs targets. The initial ubiquitin is then elongated by CDC34/UBE2R1 and UBE2R2. E3 ubiquitin-protein ligase activity is activated upon binding to neddylated cullin-RING ubiquitin ligase complexes. Plays a role in protein translation in response to DNA damage by mediating ubiquitination of EIF4E2, the consequences of EIF4E2 ubiquitination are however unclear. According to a report, EIF4E2 ubiquitination leads to promote EIF4E2 cap-binding and protein translation arrest. According to another report EIF4E2 ubiquitination leads to its subsequent degradation. Acts as the ligase involved in ISGylation of EIF4E2. In vitro, controls the degradation of the LINC (LInker of Nucleoskeleton and Cytoskeleton) complex member SUN2 and may therefore have a role in the formation and localization of the LINC complex, and as a consequence, may act in nuclear subcellular localization and nuclear morphology. This chain is E3 ubiquitin-protein ligase ARIH1 (ARIH1), found in Bos taurus (Bovine).